The primary structure comprises 367 residues: Probable alcohol dehydrogenase adh (367 aa).

Residues C43, H64, C97, C100, C103, C111, and N163 each contribute to the Zn(2+) site.

This sequence belongs to the zinc-containing alcohol dehydrogenase family. The cofactor is Zn(2+).

The catalysed reaction is a primary alcohol + NAD(+) = an aldehyde + NADH + H(+). It catalyses the reaction a secondary alcohol + NAD(+) = a ketone + NADH + H(+). This chain is Probable alcohol dehydrogenase adh (adh), found in Mycobacterium tuberculosis (strain CDC 1551 / Oshkosh).